Consider the following 450-residue polypeptide: Phosphoglucosamine mutase (450 aa).

Catalysis depends on S101, which acts as the Phosphoserine intermediate. Residues S101, D240, D242, and D244 each coordinate Mg(2+). The residue at position 101 (S101) is a Phosphoserine.

This sequence belongs to the phosphohexose mutase family. It depends on Mg(2+) as a cofactor. Post-translationally, activated by phosphorylation.

The enzyme catalyses alpha-D-glucosamine 1-phosphate = D-glucosamine 6-phosphate. Its function is as follows. Catalyzes the conversion of glucosamine-6-phosphate to glucosamine-1-phosphate. This is Phosphoglucosamine mutase from Streptococcus agalactiae serotype Ia (strain ATCC 27591 / A909 / CDC SS700).